The sequence spans 149 residues: SsrA-binding protein (149 aa).

The interval Lys-123–Glu-149 is disordered.

It belongs to the SmpB family.

It localises to the cytoplasm. In terms of biological role, required for rescue of stalled ribosomes mediated by trans-translation. Binds to transfer-messenger RNA (tmRNA), required for stable association of tmRNA with ribosomes. tmRNA and SmpB together mimic tRNA shape, replacing the anticodon stem-loop with SmpB. tmRNA is encoded by the ssrA gene; the 2 termini fold to resemble tRNA(Ala) and it encodes a 'tag peptide', a short internal open reading frame. During trans-translation Ala-aminoacylated tmRNA acts like a tRNA, entering the A-site of stalled ribosomes, displacing the stalled mRNA. The ribosome then switches to translate the ORF on the tmRNA; the nascent peptide is terminated with the 'tag peptide' encoded by the tmRNA and targeted for degradation. The ribosome is freed to recommence translation, which seems to be the essential function of trans-translation. The polypeptide is SsrA-binding protein (Cupriavidus taiwanensis (strain DSM 17343 / BCRC 17206 / CCUG 44338 / CIP 107171 / LMG 19424 / R1) (Ralstonia taiwanensis (strain LMG 19424))).